Consider the following 77-residue polypeptide: MKLTCVMIVAVLLLTACQLITADDSRGTQKHRSLRSTTKVSKSTSCMEAGSYCGSTTRICCGYCAYFGKKCIDYPSN.

The signal sequence occupies residues M1–A22. Positions D23 to K42 are excised as a propeptide. Disulfide bonds link C46/C61, C53/C64, and C60/C71.

Belongs to the conotoxin O1 superfamily. In terms of tissue distribution, expressed by the venom duct.

It is found in the secreted. In terms of biological role, omega-conotoxins act at presynaptic membranes, they bind and block voltage-gated calcium channels (Cav). This is Omega-conotoxin-like SO-5 (SO5) from Conus striatus (Striated cone).